A 423-amino-acid chain; its full sequence is Carboxypeptidase S1 (423 aa).

Cystine bridges form between Cys8/Cys68, Cys55/Cys300, Cys223/Cys246, and Cys230/Cys239. The active site involves Ser143. N-linked (GlcNAc...) asparagine glycosylation occurs at Asn200. Residue Asp340 is part of the active site. Cys343 is a substrate binding site. His397 is a catalytic residue. Position 398 (Glu398) interacts with substrate.

The protein belongs to the peptidase S10 family.

The catalysed reaction is Preferential release of a C-terminal arginine or lysine residue.. The chain is Carboxypeptidase S1 from Penicillium janthinellum (Penicillium vitale).